A 398-amino-acid chain; its full sequence is Argininosuccinate synthase (398 aa).

8–16 (AYSGGLDTS) contacts ATP. Tyr-87 is a binding site for L-citrulline. Residue Gly-117 participates in ATP binding. Residues Thr-119, Asn-123, and Asp-124 each coordinate L-aspartate. Residue Asn-123 participates in L-citrulline binding. Arg-127, Ser-175, Glu-260, and Tyr-272 together coordinate L-citrulline.

Belongs to the argininosuccinate synthase family. Type 1 subfamily. As to quaternary structure, homotetramer.

It is found in the cytoplasm. The enzyme catalyses L-citrulline + L-aspartate + ATP = 2-(N(omega)-L-arginino)succinate + AMP + diphosphate + H(+). The protein operates within amino-acid biosynthesis; L-arginine biosynthesis; L-arginine from L-ornithine and carbamoyl phosphate: step 2/3. This Mycobacterium avium (strain 104) protein is Argininosuccinate synthase.